The sequence spans 436 residues: MNNNQLSAQLARQLGAHRHLLVAFSGGLDSSVLLHLLVGLRQQLPDLQLRAVHVHHGLSAFADQWVTHCRQQCVAWQLPLVVQHVQVDSQQGGIEAAARAARYSAFASTLAADETLLTAQHLDDQCETFLLALKRGSGPAGLSAMAAQTSLGNNHLLRPLLGHSRQQLEAYAQQHQLSWIEDDSNQDPRFDRNFLRLQVLPLLNQRWPHFAAATARSASLCAEQEQLLDELLAEQLHNLLDEDRALAIDGLLTCSAARRFALLRRWIALFGVTMPSREQLQRLWEEVALSREDAEPQLQLGQYQFRRFRRRLYLLPLMADLREISLSWSLDDSLMLPDGLGELVSGEGDICLRAPQSQQKVSIRFSAQGKHRILGRAHSRPIKKLWQELGIPPWQRERIPLIYYDDQLIAALGIFVSEAGQTPEGQQPWRLHWRKK.

An ATP-binding site is contributed by Ser-25 to Ser-30.

The protein belongs to the tRNA(Ile)-lysidine synthase family.

It localises to the cytoplasm. The catalysed reaction is cytidine(34) in tRNA(Ile2) + L-lysine + ATP = lysidine(34) in tRNA(Ile2) + AMP + diphosphate + H(+). Its function is as follows. Ligates lysine onto the cytidine present at position 34 of the AUA codon-specific tRNA(Ile) that contains the anticodon CAU, in an ATP-dependent manner. Cytidine is converted to lysidine, thus changing the amino acid specificity of the tRNA from methionine to isoleucine. In Serratia proteamaculans (strain 568), this protein is tRNA(Ile)-lysidine synthase.